A 435-amino-acid polypeptide reads, in one-letter code: MTTFSPREIVSELDRYIIGQHEAKRAVAIALRNRWRRQQLDPSLRDEVMPKNILMIGPTGVGKTEISRRLAKLAGAPFIKVEATKFTEVGYVGRDVEQIIRDLVEVGIGLVREKKRAEVQAKAHVSAEERVLDALVGTTASPATRENFRKKLRDGELDDKEIDIEVADTGSGMGGFEIPGMPGANIGVLNLSEMFGKAMGGRTKKVRTTVKASYTDLIRDESDKLIDNEVIQREAVRSTENDGIVFLDEIDKIAARDGGMGAGVSREGVQRDLLPLVEGTTVSTKYGPVKTDHILFIASGAFHVSKPSDLLPELQGRLPIRVELRPLNKEDFRRILTETEASLIRQYRALMETESLSLDFTEDAIDALADVAVHLNSSVENIGARRLQTVMERVLDDISYNAPDRSGTAITIDAAYVREHVGDLAQNTDLSRFIL.

ATP is bound by residues Ile18, 60–65 (GVGKTE), Asp248, Glu313, and Arg385.

It belongs to the ClpX chaperone family. HslU subfamily. A double ring-shaped homohexamer of HslV is capped on each side by a ring-shaped HslU homohexamer. The assembly of the HslU/HslV complex is dependent on binding of ATP.

The protein localises to the cytoplasm. Functionally, ATPase subunit of a proteasome-like degradation complex; this subunit has chaperone activity. The binding of ATP and its subsequent hydrolysis by HslU are essential for unfolding of protein substrates subsequently hydrolyzed by HslV. HslU recognizes the N-terminal part of its protein substrates and unfolds these before they are guided to HslV for hydrolysis. This is ATP-dependent protease ATPase subunit HslU from Rhizobium etli (strain CIAT 652).